Here is a 128-residue protein sequence, read N- to C-terminus: MALPKDMRLKGHRTFNYIHKNSTIYHGKLMTFKVARSNPEILFTHKLTNNSNKFRMAIAISKKVSKKAVERNKLRRILQEWLLTNIKKINNHKPYWLLVNLKFGDFCNDKSRLLEEFQNLMFKSHLIK.

Belongs to the RnpA family. As to quaternary structure, consists of a catalytic RNA component (M1 or rnpB) and a protein subunit.

It carries out the reaction Endonucleolytic cleavage of RNA, removing 5'-extranucleotides from tRNA precursor.. In terms of biological role, RNaseP catalyzes the removal of the 5'-leader sequence from pre-tRNA to produce the mature 5'-terminus. It can also cleave other RNA substrates such as 4.5S RNA. The protein component plays an auxiliary but essential role in vivo by binding to the 5'-leader sequence and broadening the substrate specificity of the ribozyme. The polypeptide is Ribonuclease P protein component (Prochlorococcus marinus (strain MIT 9215)).